Consider the following 193-residue polypeptide: Holliday junction branch migration complex subunit RuvA (193 aa).

Positions 1-64 (MIGRIAGVLL…EDAHLLYGFL (64 aa)) are domain I. Residues 65–139 (TPQERSTFRE…GKLGADLGAM (75 aa)) form a domain II region. The tract at residues 139-143 (MAGAA) is flexible linker. Positions 144 to 193 (SQSDHASDILNALLALGYSEKEGLAAIKNVPAGTGVSEGIKLALKALSKA) are domain III.

Belongs to the RuvA family. Homotetramer. Forms an RuvA(8)-RuvB(12)-Holliday junction (HJ) complex. HJ DNA is sandwiched between 2 RuvA tetramers; dsDNA enters through RuvA and exits via RuvB. An RuvB hexamer assembles on each DNA strand where it exits the tetramer. Each RuvB hexamer is contacted by two RuvA subunits (via domain III) on 2 adjacent RuvB subunits; this complex drives branch migration. In the full resolvosome a probable DNA-RuvA(4)-RuvB(12)-RuvC(2) complex forms which resolves the HJ.

It is found in the cytoplasm. Functionally, the RuvA-RuvB-RuvC complex processes Holliday junction (HJ) DNA during genetic recombination and DNA repair, while the RuvA-RuvB complex plays an important role in the rescue of blocked DNA replication forks via replication fork reversal (RFR). RuvA specifically binds to HJ cruciform DNA, conferring on it an open structure. The RuvB hexamer acts as an ATP-dependent pump, pulling dsDNA into and through the RuvAB complex. HJ branch migration allows RuvC to scan DNA until it finds its consensus sequence, where it cleaves and resolves the cruciform DNA. This Paraburkholderia phymatum (strain DSM 17167 / CIP 108236 / LMG 21445 / STM815) (Burkholderia phymatum) protein is Holliday junction branch migration complex subunit RuvA.